A 736-amino-acid chain; its full sequence is Eukaryotic translation initiation factor 3 subunit B (736 aa).

A sufficient for interaction with HCR1 and TIF32 region spans residues 1-94 (MAAVFDDIRL…LFIEFEDAGA (94 aa)). The sufficient for interaction with PIC8 stretch occupies residues 1–219 (MAAVFDDIRL…GIASWGGPQF (219 aa)). Residues 37-120 (RYVVVDGAPV…HRLWVNGLDD (84 aa)) form the RRM domain. 10 WD repeats span residues 140–182 (EFEA…PENV), 186–224 (RRNWSNSILNFSPHGTYLFSFHDQGIASWGGPQFKRLRR), 226–244 (AHPDVKAISMSSTEKYLVT), 245–284 (FSSEPLEVSDEPNEACPFGPESRGHQLCIWDVATGVCVKT), 288–328 (PPQQ…QLLG), 332–375 (MKIE…QSCK), 443–483 (EIKD…VSFY), 511–557 (AIDG…TEKI), 566–604 (ATLRDVAHINYASATDYEWDPSGRYLAFWSSAWKHKAEN), and 616–662 (VREE…QDAM).

Belongs to the eIF-3 subunit B family. In terms of assembly, component of the eukaryotic translation initiation factor 3 (eIF-3) complex.

Its subcellular location is the cytoplasm. RNA-binding component of the eukaryotic translation initiation factor 3 (eIF-3) complex, which is involved in protein synthesis of a specialized repertoire of mRNAs and, together with other initiation factors, stimulates binding of mRNA and methionyl-tRNAi to the 40S ribosome. The eIF-3 complex specifically targets and initiates translation of a subset of mRNAs involved in cell proliferation. This is Eukaryotic translation initiation factor 3 subunit B from Eremothecium gossypii (strain ATCC 10895 / CBS 109.51 / FGSC 9923 / NRRL Y-1056) (Yeast).